The chain runs to 247 residues: PF03932 family protein CutC (247 aa).

It belongs to the CutC family.

The protein localises to the cytoplasm. The polypeptide is PF03932 family protein CutC (Klebsiella pneumoniae subsp. pneumoniae (strain ATCC 700721 / MGH 78578)).